Consider the following 155-residue polypeptide: Ribosomal RNA large subunit methyltransferase H (155 aa).

S-adenosyl-L-methionine is bound by residues Leu-72, Gly-103, and 122-127 (LSTMTL).

This sequence belongs to the RNA methyltransferase RlmH family. Homodimer.

The protein resides in the cytoplasm. It carries out the reaction pseudouridine(1915) in 23S rRNA + S-adenosyl-L-methionine = N(3)-methylpseudouridine(1915) in 23S rRNA + S-adenosyl-L-homocysteine + H(+). Functionally, specifically methylates the pseudouridine at position 1915 (m3Psi1915) in 23S rRNA. In Nitrosomonas eutropha (strain DSM 101675 / C91 / Nm57), this protein is Ribosomal RNA large subunit methyltransferase H.